A 776-amino-acid polypeptide reads, in one-letter code: Protein FAM83C (776 aa).

The DUF1669 stretch occupies residues Met1 to Gly340. Disordered stretches follow at residues Asn344 to Pro467, Ser494 to His565, His617 to Arg653, Pro669 to Ala694, and Gln716 to Pro745. Low complexity predominate over residues Ser368–Ser385. The segment covering Pro452–Pro467 has biased composition (polar residues). The segment covering Val523 to Arg539 has biased composition (basic and acidic residues). The segment covering Ser554–Leu563 has biased composition (polar residues).

This sequence belongs to the FAM83 family. Directly interacts (via DUF1669) with CSNK1A1 and CSNK1A1L. May interact with RAF1. Phosphorylated by CSNK1A1.

It localises to the cytoplasm. In terms of biological role, may play a role in MAPK signaling. The chain is Protein FAM83C from Mus musculus (Mouse).